A 401-amino-acid chain; its full sequence is Calcium-responsive transcription coactivator (401 aa).

The segment at 1–148 (MSVAFASARP…TLPTTSMSMS (148 aa)) is N-terminal auto-inhibitory domain; necessary for interaction with SMARCA4/BRG1. The short motif at 50–53 (YQQI) is the SH2-binding element. 2 disordered regions span residues 72 to 171 (QSLL…VPMQ) and 214 to 401 (TRAR…NYQQ). Residues 85-106 (LGPGALSQSGSSQGLHPQGSLS) show a composition bias toward low complexity. Residues 128–137 (NHVSMQQTAQ) show a composition bias toward polar residues. A compositionally biased stretch (low complexity) spans 138–149 (STLPTTSMSMSG). The interval 149-237 (GSGHGTGPGY…GGSMMGQRPM (89 aa)) is methionine-rich intra-molecular domain. Residues 251–322 (YLGQEEYYSE…SQYSQQQAGY (72 aa)) form an MFD domain region. Composition is skewed to polar residues over residues 260–276 (EQYS…SQQY) and 285–294 (AYQQSSYTEQ). A compositionally biased stretch (basic and acidic residues) spans 295–304 (SYDRSFEDPT). Positions 310–374 (GGNSQYSQQQ…QGQGQQYGSY (65 aa)) are enriched in low complexity. Residues 339-401 (NQQSYPGQQQ…EQGQYGNYQQ (63 aa)) are necessary for nuclear localization. The SH2-binding motif lies at 358–361 (SQYS). Residues 375–387 (RTSQTGPSAQQQR) show a composition bias toward polar residues. Residues 376-384 (TSQTGPSAQ) carry the SH3-binding motif. The span at 389–401 (YGYEQGQYGNYQQ) shows a compositional bias: low complexity. Positions 392–401 (EQGQYGNYQQ) are necessary for interaction with CREBBP and for the recruitment of CREBBP to the nuclear bodies. The SH2-binding signature appears at 396–399 (YGNY).

This sequence belongs to the SS18 family. As to quaternary structure, homodimer. Dimerization may be necessary for its function in neuronal dendritic development. Interacts (via C-terminus) with CREBBP (via N-terminus), EP300 and SMARCA4/BRG1. Interacts with the nBAF complex. Association with CREBBP facilitates transcription while the association with SMARCA4/BRG1 suppresses CREST-mediated transcription in resting neurons. In terms of tissue distribution, brain (at protein level). Also found in the heart, liver, kidney and testis.

It localises to the nucleus. The protein resides in the chromosome. The protein localises to the centromere. Its subcellular location is the kinetochore. In terms of biological role, transcriptional activator which is required for calcium-dependent dendritic growth and branching in cortical neurons. Recruits CREB-binding protein (CREBBP) to nuclear bodies. Component of the CREST-BRG1 complex, a multiprotein complex that regulates promoter activation by orchestrating a calcium-dependent release of a repressor complex and a recruitment of an activator complex. In resting neurons, transcription of the c-FOS promoter is inhibited by BRG1-dependent recruitment of a phospho-RB1-HDAC1 repressor complex. Upon calcium influx, RB1 is dephosphorylated by calcineurin, which leads to release of the repressor complex. At the same time, there is increased recruitment of CREBBP to the promoter by a CREST-dependent mechanism, which leads to transcriptional activation. The CREST-BRG1 complex also binds to the NR2B promoter, and activity-dependent induction of NR2B expression involves a release of HDAC1 and recruitment of CREBBP. The chain is Calcium-responsive transcription coactivator (Ss18l1) from Rattus norvegicus (Rat).